Consider the following 120-residue polypeptide: Eukaryotic translation initiation factor 4E-binding protein 2 (120 aa).

Phosphothreonine; by MTOR is present on residues threonine 37 and threonine 46. Residues 54 to 60 (YDRKFLL) carry the YXXXXLphi motif motif. Serine 65 carries the post-translational modification Phosphoserine; by MTOR. Threonine 70 carries the post-translational modification Phosphothreonine; by MTOR. At serine 83 the chain carries Phosphoserine. Residues asparagine 99 and asparagine 102 each carry the deamidated asparagine modification. The TOS motif signature appears at 116–120 (FEMDI).

Belongs to the eIF4E-binding protein family. Hypophosphorylated EIF4EBP2 interacts with EIF4E; phosphorylation of EIF4EBP2 by mTORC1 causes dissociation of the complex allowing EIF4G1/EIF4G3 to bind and consequent initiation of translation. Interacts (via TOS motif) with RPTOR; promoting phosphorylation by mTORC1. Interacts with PCMT1; required to prevent isoaspartate accumulation and convert isoaspartate to Asp. Phosphorylation at Thr-37, Thr-46, Ser-65, Thr-70 and Ser-83 is mediated by MTOR and corresponds to the hyperphosphorylated form: it abolishes binding to EIF4E by inducing folding of intrinsically disordered regions. First phosphorylated at Thr-37 and Thr-46 by MTOR, inducing folding of region encompassing residues from Pro-18 to Arg-62 of into a four-stranded beta-domain that sequesters the helical YXXXXLPhi motif into a partly buried beta-strand, blocking accessibility to EIF4E. Protein phosphorylated at Thr-37 and Thr-46 is however unstable and subsequent phosphorylation at Ser-65, Thr-70 and Ser-83 is required to stabilize the fold, decreasing affinity for EIF4E by a factor of 4000. Phosphorylated in response to insulin, EGF and PDGF. Post-translationally, deamidated at Asn-99 and Asn-102 to aspartate (Asp) in brain. Deamidation promotes interaction with RPTOR, subsequent phosphorylation by mTORC1 and increased translation, leading to impair kinetics of excitatory synaptic transmission. Deamidation takes place during postnatal development, when the PI3K-Akt-mTOR signaling is reduced, suggesting it acts as a compensatory mechanism to promote translation despite attenuated PI3K-Akt-mTOR signaling in neuron development. Deamidation converts Asn residues into a mixture of Asp and isoaspartate; interactions with PCMT1 is required to prevent isoaspartate accumulation and convert isoaspartate to Asp. As to expression, enriched in brain.

The protein localises to the cytoplasm. Its subcellular location is the nucleus. Repressor of translation initiation involved in synaptic plasticity, learning and memory formation. Regulates EIF4E activity by preventing its assembly into the eIF4F complex: hypophosphorylated form of EIF4EBP2 competes with EIF4G1/EIF4G3 and strongly binds to EIF4E, leading to repress translation. In contrast, hyperphosphorylated form dissociates from EIF4E, allowing interaction between EIF4G1/EIF4G3 and EIF4E, leading to initiation of translation. EIF4EBP2 is enriched in brain and acts as a regulator of synapse activity and neuronal stem cell renewal via its ability to repress translation initiation. Mediates the regulation of protein translation by hormones, growth factors and other stimuli that signal through the MAP kinase and mTORC1 pathways. The chain is Eukaryotic translation initiation factor 4E-binding protein 2 from Mus musculus (Mouse).